The primary structure comprises 638 residues: MKGGCVSQWKAAAGFLFCVMVFASAERPVFTNHFLVELHKGGEDEARQVAAEHGFGVRKLPFAEGLYHFYHNGLAKAKRRRSLHHKQQLERDPRVKMALQQEGFDRKKRGYRDINEIDINMNDPLFTKQWYLINTGQADGTPGLDLNVAEAWELGYTGKGVTIGIMDDGIDYLHPDLASNYNAEASYDFSSNDPYPYPRYTDDWFNSHGTRCAGEVSAAANNNICGVGVAYNSKVAGIRMLDQPFMTDIIEASSISHMPQLIDIYSASWGPTDNGKTVDGPRELTLQAMADGVNKGRGGKGSIYVWASGDGGSYDDCNCDGYASSMWTISINSAINDGRTALYDESCSSTLASTFSNGRKRNPEAGVATTDLYGNCTLRHSGTSAAAPEAAGVFALALEANLGLTWRDMQHLTVLTSKRNQLHDEVHQWRRNGVGLEFNHLFGYGVLDAGAMVKMAKDWKTVPERFHCVGGSVQDPEKIPSTGKLVLTLTTDACEGKENFVRYLEHVQAVITVNATRRGDLNINMTSPMGTKSILLSRRPRDDDSKVGFDKWPFMTTHTWGEDARGTWTLELGFVGSAPQKGVLKEWTLMLHGTQSAPYIDQVVRDYQSKLAMSKKEELEEELDEAVERSLKSILNKN.

The signal sequence occupies residues 1–25 (MKGGCVSQWKAAAGFLFCVMVFASA). Positions 26–109 (ERPVFTNHFL…QQEGFDRKKR (84 aa)) are excised as a propeptide. The Peptidase S8 domain occupies 129-453 (QWYLINTGQA…YGVLDAGAMV (325 aa)). Active-site charge relay system residues include Asp-167 and His-208. 2 cysteine pairs are disulfide-bonded: Cys-225–Cys-376 and Cys-317–Cys-347. Residue Asn-375 is glycosylated (N-linked (GlcNAc...) asparagine). The Charge relay system role is filled by Ser-384. The P/Homo B domain maps to 461-597 (TVPERFHCVG…TLMLHGTQSA (137 aa)). Cysteines 468 and 494 form a disulfide. Residues Asn-514 and Asn-524 are each glycosylated (N-linked (GlcNAc...) asparagine).

The protein belongs to the peptidase S8 family. Furin subfamily.

The protein resides in the cytoplasmic vesicle. Its subcellular location is the secretory vesicle. It is found in the secreted. The enzyme catalyses Release of protein hormones and neuropeptides from their precursors, generally by hydrolysis of -Lys-Arg-|- bonds.. Serine endopeptidase which is involved in the processing of hormone and other protein precursors at sites comprised of pairs of basic amino acid residues. Responsible for the release of glucagon from proglucagon in pancreatic A cells. This Pongo abelii (Sumatran orangutan) protein is Neuroendocrine convertase 2 (PCSK2).